Consider the following 68-residue polypeptide: UPF0435 protein SAOUHSC_02093 (68 aa).

It belongs to the UPF0435 family.

This Staphylococcus aureus (strain NCTC 8325 / PS 47) protein is UPF0435 protein SAOUHSC_02093.